Consider the following 466-residue polypeptide: Glutamate--tRNA ligase (466 aa).

Positions proline 10–glycine 20 match the 'HIGH' region motif. Residues lysine 252–arginine 256 carry the 'KMSKS' region motif. ATP is bound at residue lysine 255.

Belongs to the class-I aminoacyl-tRNA synthetase family. Glutamate--tRNA ligase type 1 subfamily. In terms of assembly, monomer.

It localises to the cytoplasm. It carries out the reaction tRNA(Glu) + L-glutamate + ATP = L-glutamyl-tRNA(Glu) + AMP + diphosphate. Catalyzes the attachment of glutamate to tRNA(Glu) in a two-step reaction: glutamate is first activated by ATP to form Glu-AMP and then transferred to the acceptor end of tRNA(Glu). This Mycoplasmopsis synoviae (strain 53) (Mycoplasma synoviae) protein is Glutamate--tRNA ligase.